We begin with the raw amino-acid sequence, 218 residues long: Protein-methionine-sulfoxide reductase heme-binding subunit MsrQ (218 aa).

The next 5 membrane-spanning stretches (helical) occupy residues 14–34 (AVHA…WQVW), 60–80 (LLLI…AVLI), 86–106 (LGLY…WLDL), 121–141 (PYIT…ITST), and 155–175 (LHML…WLVK).

It belongs to the MsrQ family. Heterodimer of a catalytic subunit (MsrP) and a heme-binding subunit (MsrQ). It depends on FMN as a cofactor. Requires heme b as cofactor.

The protein resides in the cell inner membrane. Functionally, part of the MsrPQ system that repairs oxidized periplasmic proteins containing methionine sulfoxide residues (Met-O), using respiratory chain electrons. Thus protects these proteins from oxidative-stress damage caused by reactive species of oxygen and chlorine generated by the host defense mechanisms. MsrPQ is essential for the maintenance of envelope integrity under bleach stress, rescuing a wide series of structurally unrelated periplasmic proteins from methionine oxidation. MsrQ provides electrons for reduction to the reductase catalytic subunit MsrP, using the quinone pool of the respiratory chain. The protein is Protein-methionine-sulfoxide reductase heme-binding subunit MsrQ of Xanthomonas campestris pv. campestris (strain B100).